The following is a 66-amino-acid chain: Large ribosomal subunit protein uL29 (66 aa).

Belongs to the universal ribosomal protein uL29 family.

This is Large ribosomal subunit protein uL29 from Thermoplasma volcanium (strain ATCC 51530 / DSM 4299 / JCM 9571 / NBRC 15438 / GSS1).